The sequence spans 245 residues: Uridylate kinase (245 aa).

Lys-16 to Gly-19 lines the ATP pocket. Gly-58 provides a ligand contact to UMP. Positions 59 and 63 each coordinate ATP. UMP-binding positions include Asp-78 and Thr-139 to Thr-146. 3 residues coordinate ATP: Thr-166, Tyr-172, and Asp-175.

This sequence belongs to the UMP kinase family. In terms of assembly, homohexamer.

Its subcellular location is the cytoplasm. It carries out the reaction UMP + ATP = UDP + ADP. The protein operates within pyrimidine metabolism; CTP biosynthesis via de novo pathway; UDP from UMP (UMPK route): step 1/1. Inhibited by UTP. Catalyzes the reversible phosphorylation of UMP to UDP. In Idiomarina loihiensis (strain ATCC BAA-735 / DSM 15497 / L2-TR), this protein is Uridylate kinase.